Consider the following 142-residue polypeptide: Nucleoside diphosphate kinase (142 aa).

6 residues coordinate ATP: Lys11, Phe59, Arg87, Thr93, Arg104, and Asn114. Catalysis depends on His117, which acts as the Pros-phosphohistidine intermediate.

The protein belongs to the NDK family. Homotetramer. Mg(2+) serves as cofactor.

Its subcellular location is the cytoplasm. It catalyses the reaction a 2'-deoxyribonucleoside 5'-diphosphate + ATP = a 2'-deoxyribonucleoside 5'-triphosphate + ADP. It carries out the reaction a ribonucleoside 5'-diphosphate + ATP = a ribonucleoside 5'-triphosphate + ADP. Major role in the synthesis of nucleoside triphosphates other than ATP. The ATP gamma phosphate is transferred to the NDP beta phosphate via a ping-pong mechanism, using a phosphorylated active-site intermediate. In Pectobacterium carotovorum subsp. carotovorum (strain PC1), this protein is Nucleoside diphosphate kinase.